A 259-amino-acid polypeptide reads, in one-letter code: Phosphatidylglycerol--prolipoprotein diacylglyceryl transferase (259 aa).

Helical transmembrane passes span isoleucine 10–tyrosine 30, isoleucine 50–tyrosine 70, tryptophan 86–phenylalanine 106, and isoleucine 112–glycine 132. An a 1,2-diacyl-sn-glycero-3-phospho-(1'-sn-glycerol)-binding site is contributed by arginine 133. Transmembrane regions (helical) follow at residues leucine 169 to phenylalanine 189, glycine 197 to valine 217, and isoleucine 227 to isoleucine 247.

The protein belongs to the Lgt family.

It localises to the cell inner membrane. It catalyses the reaction L-cysteinyl-[prolipoprotein] + a 1,2-diacyl-sn-glycero-3-phospho-(1'-sn-glycerol) = an S-1,2-diacyl-sn-glyceryl-L-cysteinyl-[prolipoprotein] + sn-glycerol 1-phosphate + H(+). It participates in protein modification; lipoprotein biosynthesis (diacylglyceryl transfer). Functionally, catalyzes the transfer of the diacylglyceryl group from phosphatidylglycerol to the sulfhydryl group of the N-terminal cysteine of a prolipoprotein, the first step in the formation of mature lipoproteins. The chain is Phosphatidylglycerol--prolipoprotein diacylglyceryl transferase from Ehrlichia ruminantium (strain Gardel).